Reading from the N-terminus, the 104-residue chain is Protein METHYLENE BLUE SENSITIVITY 2 (104 aa).

The segment covering M1–T11 has biased composition (basic residues). Disordered stretches follow at residues M1–K46 and I64–K104. Basic and acidic residues-rich tracts occupy residues R36–K46 and L73–H82.

The protein localises to the nucleus. The protein resides in the cytoplasm. Its subcellular location is the stress granule. Required for acclimation to reactive oxygen species (ROS) responses downstream of beta-cyclocitral, including singlet oxygen 1O(2) detoxification reactions, especially upon light-mediated photooxidative stress, and leading to programmed cell death. Prevents leaf senescence. The sequence is that of Protein METHYLENE BLUE SENSITIVITY 2 from Arabidopsis thaliana (Mouse-ear cress).